A 472-amino-acid polypeptide reads, in one-letter code: Ribosomal protein uS12 methylthiotransferase RimO (472 aa).

The MTTase N-terminal domain maps to N33–P143. [4Fe-4S] cluster contacts are provided by C42, C78, C107, C175, C179, and C182. In terms of domain architecture, Radical SAM core spans L161 to E398. The 67-residue stretch at A401–D467 folds into the TRAM domain.

Belongs to the methylthiotransferase family. RimO subfamily. The cofactor is [4Fe-4S] cluster.

It localises to the cytoplasm. The enzyme catalyses L-aspartate(89)-[ribosomal protein uS12]-hydrogen + (sulfur carrier)-SH + AH2 + 2 S-adenosyl-L-methionine = 3-methylsulfanyl-L-aspartate(89)-[ribosomal protein uS12]-hydrogen + (sulfur carrier)-H + 5'-deoxyadenosine + L-methionine + A + S-adenosyl-L-homocysteine + 2 H(+). Its function is as follows. Catalyzes the methylthiolation of an aspartic acid residue of ribosomal protein uS12. In Shewanella baltica (strain OS195), this protein is Ribosomal protein uS12 methylthiotransferase RimO.